A 247-amino-acid chain; its full sequence is E3 SUMO-protein ligase NSE2 (247 aa).

Met1 is subject to N-acetylmethionine. Residues Lys90 and Lys107 each participate in a glycyl lysine isopeptide (Lys-Gly) (interchain with G-Cter in SUMO2) cross-link. Ser116 is subject to Phosphoserine. Glycyl lysine isopeptide (Lys-Gly) (interchain with G-Cter in SUMO2) cross-links involve residues Lys125 and Lys130. The SP-RING-type zinc finger occupies 154–240 (VDEDMIVTQS…LRRAIESHNK (87 aa)). Cys185, His187, Cys210, and Cys215 together coordinate Zn(2+).

It belongs to the NSE2 family. As to quaternary structure, component of the SMC5-SMC6 complex which consists at least of SMC5, SMC6, NSMCE2, NSMCE1, NSMCE4A or EID3 and NSMCE3. Sumoylated, possibly via autosumoylation.

It is found in the nucleus. It localises to the chromosome. The protein resides in the telomere. The protein localises to the PML body. It participates in protein modification; protein sumoylation. E3 SUMO-protein ligase component of the SMC5-SMC6 complex, a complex involved in DNA double-strand break repair by homologous recombination. Is not be required for the stability of the complex. The complex may promote sister chromatid homologous recombination by recruiting the SMC1-SMC3 cohesin complex to double-strand breaks. Acts as an E3 ligase mediating SUMO attachment to various proteins such as SMC6L1 and TSNAX, the shelterin complex subunits TERF1, TERF2, TINF2 and TERF2IP, RAD51AP1, and maybe the cohesin components RAD21 and STAG2. Required for recruitment of telomeres to PML nuclear bodies. Required for sister chromatid cohesion during prometaphase and mitotic progression. This is E3 SUMO-protein ligase NSE2 (Nsmce2) from Mus musculus (Mouse).